A 96-amino-acid chain; its full sequence is Myosuppressin (96 aa).

An N-terminal signal peptide occupies residues 1-24 (MALGNGYYCAVVCVVLACASVVLC). A propeptide spanning residues 25–80 (APAQLCAGAADDDPRAARFCQALNTFLELYAEAAGEQVPEYQALVRDYPQLLDTGM) is cleaved from the precursor. Q83 is subject to Pyrrolidone carboxylic acid; partial. F92 carries the phenylalanine amide modification. A propeptide is located at residue R96.

The protein belongs to the myosuppressin family. As to expression, expressed in corpora cardiaca (CC), corpora allata (CA), antennal lobe (AL) and gnathal ganglion (GNG) (at protein level). In its non-pyroglutamate form, expression in GNG detected in all animals, in AL, CC and in CA in most animals (at protein level). In its pyroglutamate form, expression in CC, CA and GNG detected in all animals, in AL in some animals (at protein level).

The protein resides in the secreted. In terms of biological role, myoinhibiting neuropeptide. In Agrotis ipsilon (Black cutworm moth), this protein is Myosuppressin.